The sequence spans 324 residues: tRNA dimethylallyltransferase (324 aa).

Position 17–24 (17–24) interacts with ATP; that stretch reads GPTASGKT. 19-24 contributes to the substrate binding site; it reads TASGKT. Interaction with substrate tRNA stretches follow at residues 42–45, 166–170, and 251–256; these read DSAL, QRIQR, and RCVGYR.

It belongs to the IPP transferase family. In terms of assembly, monomer. Mg(2+) is required as a cofactor.

The catalysed reaction is adenosine(37) in tRNA + dimethylallyl diphosphate = N(6)-dimethylallyladenosine(37) in tRNA + diphosphate. Its function is as follows. Catalyzes the transfer of a dimethylallyl group onto the adenine at position 37 in tRNAs that read codons beginning with uridine, leading to the formation of N6-(dimethylallyl)adenosine (i(6)A). This is tRNA dimethylallyltransferase from Burkholderia mallei (strain NCTC 10247).